Consider the following 563-residue polypeptide: BOS complex subunit NCLN (563 aa).

An N-terminal signal peptide occupies residues 1-42 (MLEEAGEVLENMLKASCLPLGFIVFLPAVLLLVAPPLPAADA). At 43-522 (AHEFTVYRMQ…VMNAYRVKPA (480 aa)) the chain is on the lumenal side. N-linked (GlcNAc...) asparagine glycans are attached at residues Asn-241 and Asn-428. Residues 523 to 543 (IFDLLLAVCIGAYLGMAYTAV) traverse the membrane as a helical segment. Over 544–563 (QHFDLLYKTVQRLLVKAKTQ) the chain is Cytoplasmic.

This sequence belongs to the nicastrin family. As to quaternary structure, component of the back of Sec61 (BOS) complex, composed of NCLN/Nicalin, NOMO1 and TMEM147. The BOS complex is part of the multi-pass translocon (MPT) complex, composed of three subcomplexes, the GEL complex (composed of RAB5IF/OPTI and TMCO1), the BOS complex (composed of NCLN/Nicalin, NOMO1 and TMEM147) and the PAT complex (composed of WDR83OS/Asterix and CCDC47). The MPT complex associates with the SEC61 complex.

It localises to the endoplasmic reticulum membrane. Functionally, component of the multi-pass translocon (MPT) complex that mediates insertion of multi-pass membrane proteins into the lipid bilayer of membranes. The MPT complex takes over after the SEC61 complex: following membrane insertion of the first few transmembrane segments of proteins by the SEC61 complex, the MPT complex occludes the lateral gate of the SEC61 complex to promote insertion of subsequent transmembrane regions. May antagonize Nodal signaling and subsequent organization of axial structures during mesodermal patterning, via its interaction with NOMO. In Canis lupus familiaris (Dog), this protein is BOS complex subunit NCLN.